The primary structure comprises 443 residues: Ribosomal protein uS12 methylthiotransferase RimO (443 aa).

The MTTase N-terminal domain maps to 5–116 (PSVAVAHLGC…IVDVIQRAEA (112 aa)). Residues Cys14, Cys50, Cys79, Cys154, Cys158, and Cys161 each coordinate [4Fe-4S] cluster. Residues 140–370 (TTTEGTAYVR…ALQQPISWQQ (231 aa)) enclose the Radical SAM core domain. In terms of domain architecture, TRAM spans 372-442 (QQEVGKTVQV…AYDLQGQLVS (71 aa)).

This sequence belongs to the methylthiotransferase family. RimO subfamily. The cofactor is [4Fe-4S] cluster.

Its subcellular location is the cytoplasm. The enzyme catalyses L-aspartate(89)-[ribosomal protein uS12]-hydrogen + (sulfur carrier)-SH + AH2 + 2 S-adenosyl-L-methionine = 3-methylsulfanyl-L-aspartate(89)-[ribosomal protein uS12]-hydrogen + (sulfur carrier)-H + 5'-deoxyadenosine + L-methionine + A + S-adenosyl-L-homocysteine + 2 H(+). In terms of biological role, catalyzes the methylthiolation of an aspartic acid residue of ribosomal protein uS12. The sequence is that of Ribosomal protein uS12 methylthiotransferase RimO from Acaryochloris marina (strain MBIC 11017).